A 97-amino-acid chain; its full sequence is Pollen allergen Lol p 2-A (97 aa).

Positions 15 to 96 constitute an Expansin-like CBD domain; sequence KNLALSIKYN…DFKVGTTYKP (82 aa).

The protein belongs to the expansin family. Expansin B subfamily.

The protein localises to the secreted. This is Pollen allergen Lol p 2-A from Lolium perenne (Perennial ryegrass).